We begin with the raw amino-acid sequence, 123 residues long: DNA-directed RNA polymerase subunit omega (123 aa).

The disordered stretch occupies residues 67–123; that stretch reads EESAADSLSLGGFSTADVEAEVGGGPVQPDPGASQERAFDEAADGTAQGSGDPDPTT.

This sequence belongs to the RNA polymerase subunit omega family. As to quaternary structure, the RNAP catalytic core consists of 2 alpha, 1 beta, 1 beta' and 1 omega subunit. When a sigma factor is associated with the core the holoenzyme is formed, which can initiate transcription.

It catalyses the reaction RNA(n) + a ribonucleoside 5'-triphosphate = RNA(n+1) + diphosphate. Its function is as follows. Promotes RNA polymerase assembly. Latches the N- and C-terminal regions of the beta' subunit thereby facilitating its interaction with the beta and alpha subunits. The chain is DNA-directed RNA polymerase subunit omega from Halorhodospira halophila (strain DSM 244 / SL1) (Ectothiorhodospira halophila (strain DSM 244 / SL1)).